The chain runs to 359 residues: Phospho-N-acetylmuramoyl-pentapeptide-transferase (359 aa).

Helical transmembrane passes span glutamine 3–isoleucine 23, glycine 53–isoleucine 73, glycine 84–isoleucine 104, threonine 117–phenylalanine 137, isoleucine 156–alanine 176, leucine 187–phenylalanine 207, leucine 231–alanine 251, isoleucine 255–threonine 275, valine 283–phenylalanine 303, and valine 330–tyrosine 350.

This sequence belongs to the glycosyltransferase 4 family. MraY subfamily. Requires Mg(2+) as cofactor.

It localises to the cell membrane. It catalyses the reaction UDP-N-acetyl-alpha-D-muramoyl-L-alanyl-gamma-D-glutamyl-meso-2,6-diaminopimeloyl-D-alanyl-D-alanine + di-trans,octa-cis-undecaprenyl phosphate = di-trans,octa-cis-undecaprenyl diphospho-N-acetyl-alpha-D-muramoyl-L-alanyl-D-glutamyl-meso-2,6-diaminopimeloyl-D-alanyl-D-alanine + UMP. It functions in the pathway cell wall biogenesis; peptidoglycan biosynthesis. Catalyzes the initial step of the lipid cycle reactions in the biosynthesis of the cell wall peptidoglycan: transfers peptidoglycan precursor phospho-MurNAc-pentapeptide from UDP-MurNAc-pentapeptide onto the lipid carrier undecaprenyl phosphate, yielding undecaprenyl-pyrophosphoryl-MurNAc-pentapeptide, known as lipid I. In Rhodococcus opacus (strain B4), this protein is Phospho-N-acetylmuramoyl-pentapeptide-transferase.